The following is a 299-amino-acid chain: Phosphatidylserine decarboxylase proenzyme (299 aa).

Residues aspartate 115, histidine 171, and serine 258 each act as charge relay system; for autoendoproteolytic cleavage activity in the active site. Serine 258 (schiff-base intermediate with substrate; via pyruvic acid; for decarboxylase activity) is an active-site residue. Pyruvic acid (Ser); by autocatalysis is present on serine 258.

Belongs to the phosphatidylserine decarboxylase family. PSD-B subfamily. Prokaryotic type II sub-subfamily. As to quaternary structure, heterodimer of a large membrane-associated beta subunit and a small pyruvoyl-containing alpha subunit. The cofactor is pyruvate. In terms of processing, is synthesized initially as an inactive proenzyme. Formation of the active enzyme involves a self-maturation process in which the active site pyruvoyl group is generated from an internal serine residue via an autocatalytic post-translational modification. Two non-identical subunits are generated from the proenzyme in this reaction, and the pyruvate is formed at the N-terminus of the alpha chain, which is derived from the carboxyl end of the proenzyme. The autoendoproteolytic cleavage occurs by a canonical serine protease mechanism, in which the side chain hydroxyl group of the serine supplies its oxygen atom to form the C-terminus of the beta chain, while the remainder of the serine residue undergoes an oxidative deamination to produce ammonia and the pyruvoyl prosthetic group on the alpha chain. During this reaction, the Ser that is part of the protease active site of the proenzyme becomes the pyruvoyl prosthetic group, which constitutes an essential element of the active site of the mature decarboxylase.

The protein resides in the cell membrane. It catalyses the reaction a 1,2-diacyl-sn-glycero-3-phospho-L-serine + H(+) = a 1,2-diacyl-sn-glycero-3-phosphoethanolamine + CO2. It functions in the pathway phospholipid metabolism; phosphatidylethanolamine biosynthesis; phosphatidylethanolamine from CDP-diacylglycerol: step 2/2. In terms of biological role, catalyzes the formation of phosphatidylethanolamine (PtdEtn) from phosphatidylserine (PtdSer). The polypeptide is Phosphatidylserine decarboxylase proenzyme (Chlamydia caviae (strain ATCC VR-813 / DSM 19441 / 03DC25 / GPIC) (Chlamydophila caviae)).